We begin with the raw amino-acid sequence, 240 residues long: Ribose-5-phosphate isomerase A (240 aa).

Positions methionine 1–threonine 23 are disordered. Substrate contacts are provided by residues threonine 32 to threonine 35, aspartate 92 to aspartate 95, and lysine 111 to glycine 114. The active-site Proton acceptor is the glutamate 120. Lysine 138 is a substrate binding site.

The protein belongs to the ribose 5-phosphate isomerase family. As to quaternary structure, homodimer.

The enzyme catalyses aldehydo-D-ribose 5-phosphate = D-ribulose 5-phosphate. It participates in carbohydrate degradation; pentose phosphate pathway; D-ribose 5-phosphate from D-ribulose 5-phosphate (non-oxidative stage): step 1/1. Catalyzes the reversible conversion of ribose-5-phosphate to ribulose 5-phosphate. The protein is Ribose-5-phosphate isomerase A of Halorubrum lacusprofundi (strain ATCC 49239 / DSM 5036 / JCM 8891 / ACAM 34).